A 504-amino-acid polypeptide reads, in one-letter code: Anaerobic nitric oxide reductase transcription regulator NorR (504 aa).

4-aspartylphosphate is present on D57. In terms of domain architecture, Sigma-54 factor interaction spans 187–416 (MIGLSPGMTQ…LEHAIHRAVV (230 aa)). ATP contacts are provided by residues 215–222 (GETGTGKE) and 278–287 (ADNGTLFLDE). The H-T-H motif DNA-binding region spans 479 to 498 (WAACARMLETDVANLHRLAK).

Its pathway is nitrogen metabolism; nitric oxide reduction. Its function is as follows. Required for the expression of anaerobic nitric oxide (NO) reductase, acts as a transcriptional activator for at least the norVW operon. Activation also requires sigma-54. The chain is Anaerobic nitric oxide reductase transcription regulator NorR from Escherichia coli O127:H6 (strain E2348/69 / EPEC).